A 322-amino-acid chain; its full sequence is Undecaprenyl-phosphate 4-deoxy-4-formamido-L-arabinose transferase (322 aa).

At 1-235 (MFEIHPVKKV…TCLTTTPLRM (235 aa)) the chain is on the cytoplasmic side. The chain crosses the membrane as a helical span at residues 236 to 256 (LSLLGSIIAIGGFSIAVLLVI). At 257-269 (LRLTFGPQWAAEG) the chain is on the periplasmic side. A helical membrane pass occupies residues 270–290 (VFMLFAVLFTFIGAQFIGMGL). Residues 291–322 (LGEYIGRIYTDVRARPRYFVQQVIRPSSKENE) are Cytoplasmic-facing.

This sequence belongs to the glycosyltransferase 2 family.

It localises to the cell inner membrane. The enzyme catalyses UDP-4-deoxy-4-formamido-beta-L-arabinose + di-trans,octa-cis-undecaprenyl phosphate = 4-deoxy-4-formamido-alpha-L-arabinopyranosyl di-trans,octa-cis-undecaprenyl phosphate + UDP. It functions in the pathway glycolipid biosynthesis; 4-amino-4-deoxy-alpha-L-arabinose undecaprenyl phosphate biosynthesis; 4-amino-4-deoxy-alpha-L-arabinose undecaprenyl phosphate from UDP-4-deoxy-4-formamido-beta-L-arabinose and undecaprenyl phosphate: step 1/2. The protein operates within bacterial outer membrane biogenesis; lipopolysaccharide biosynthesis. Functionally, catalyzes the transfer of 4-deoxy-4-formamido-L-arabinose from UDP to undecaprenyl phosphate. The modified arabinose is attached to lipid A and is required for resistance to polymyxin and cationic antimicrobial peptides. The polypeptide is Undecaprenyl-phosphate 4-deoxy-4-formamido-L-arabinose transferase (Shigella flexneri serotype 5b (strain 8401)).